Reading from the N-terminus, the 439-residue chain is Ribosomal protein uS12 methylthiotransferase RimO (439 aa).

Residues 7–119 (KQLCLISLGC…IDIMIAKKQN (113 aa)) enclose the MTTase N-terminal domain. 6 residues coordinate [4Fe-4S] cluster: Cys16, Cys50, Cys82, Cys151, Cys155, and Cys158. The Radical SAM core domain occupies 137 to 368 (TGSSVHAYVK…ALKHQNHSFK (232 aa)).

It belongs to the methylthiotransferase family. RimO subfamily. The cofactor is [4Fe-4S] cluster.

It is found in the cytoplasm. It carries out the reaction L-aspartate(89)-[ribosomal protein uS12]-hydrogen + (sulfur carrier)-SH + AH2 + 2 S-adenosyl-L-methionine = 3-methylsulfanyl-L-aspartate(89)-[ribosomal protein uS12]-hydrogen + (sulfur carrier)-H + 5'-deoxyadenosine + L-methionine + A + S-adenosyl-L-homocysteine + 2 H(+). Functionally, catalyzes the methylthiolation of an aspartic acid residue of ribosomal protein uS12. This chain is Ribosomal protein uS12 methylthiotransferase RimO, found in Helicobacter pylori (strain G27).